The primary structure comprises 312 residues: MKVAVLGAAGGIGQALALLLKTQLPAGSDLSLYDIAPVTPGVAVDLSHIPTDVTIAGFAGMDPTDALVGADVVLISAGVARKPGMDRSDLFNINAGIIKNLAGKCAEVCPNACIGIITNPVNTTVPIAAEVLKQAGVYDKRKLFGITTLDVIRSETFVSELKGISLADVEVPVIGGHSGVTILPLLSQVKGVEFTAEEIATLTPRIQNAGTEVVEAKAGGGSATLSMGQAAARFGLSLVRALQGEEGIVECTYVDGGSEHATFFAQPVLLGKNGVEEVLAYGELSEFETNARDAMLEELKANITLGEEFVAG.

Residues 7-13 (GAAGGIG) and D34 each bind NAD(+). Positions 81 and 87 each coordinate substrate. NAD(+)-binding positions include N94 and 117–119 (ITN). N119 and R153 together coordinate substrate. H177 (proton acceptor) is an active-site residue. M227 is a binding site for NAD(+).

It belongs to the LDH/MDH superfamily. MDH type 1 family. In terms of assembly, homodimer.

The catalysed reaction is (S)-malate + NAD(+) = oxaloacetate + NADH + H(+). Functionally, catalyzes the reversible oxidation of malate to oxaloacetate. This chain is Malate dehydrogenase, found in Moritella marina (Vibrio marinus).